The following is a 20-amino-acid chain: Non-specific lipid-transfer protein (20 aa).

The protein belongs to the plant LTP family. As to expression, leaf.

Functionally, plant non-specific lipid-transfer proteins transfer phospholipids as well as galactolipids across membranes. May play a role in wax or cutin deposition in the cell walls of expanding epidermal cells and certain secretory tissues. The polypeptide is Non-specific lipid-transfer protein (Cannabis sativa (Hemp)).